Here is a 407-residue protein sequence, read N- to C-terminus: Aminomethyltransferase, mitochondrial (407 aa).

Residues 1–29 (MRGGLWQLGQSITRRLGQSDKKTIVRRCY) constitute a mitochondrion transit peptide. Substrate-binding residues include Glu-234, Arg-265, and Tyr-403.

It belongs to the GcvT family. In terms of assembly, the glycine cleavage system is composed of four proteins: P, T, L and H.

The protein localises to the mitochondrion. The enzyme catalyses N(6)-[(R)-S(8)-aminomethyldihydrolipoyl]-L-lysyl-[protein] + (6S)-5,6,7,8-tetrahydrofolate = N(6)-[(R)-dihydrolipoyl]-L-lysyl-[protein] + (6R)-5,10-methylene-5,6,7,8-tetrahydrofolate + NH4(+). The glycine cleavage system catalyzes the degradation of glycine. The chain is Aminomethyltransferase, mitochondrial (GDCST) from Flaveria anomala (Yellowtops).